The sequence spans 539 residues: Alpha-aminoadipic semialdehyde dehydrogenase (539 aa).

A mitochondrion-targeting transit peptide spans 1–26 (MWRVPRRLCVQSVKTSKLSGPWSRPA). N6-acetyllysine; alternate occurs at positions 86, 94, and 97. Residues Lys86, Lys94, and Lys97 each carry the N6-succinyllysine; alternate modification. NAD(+) contacts are provided by residues 192–194 (TAF), Lys218, 258–259 (GT), 274–275 (GS), 274–279 (GSTQVG), and 296–297 (EL). Glu296 functions as the Proton acceptor in the catalytic mechanism. The active-site Nucleophile is Cys330. Thr331 contributes to the (S)-2-amino-6-oxohexanoate binding site. An NAD(+)-binding site is contributed by Glu427. The residue at position 462 (Lys462) is an N6-acetyllysine. Residues Gly489 and Ala490 each contribute to the (S)-2-amino-6-oxohexanoate site. An N6-acetyllysine modification is found at Lys500. Position 537 is an N6-succinyllysine (Lys537).

Belongs to the aldehyde dehydrogenase family. In terms of assembly, homotetramer. In terms of tissue distribution, present in liver, kidney, brain and pancreas, and at lower levels in jejunum, duodenum, stomach and testes (at protein level).

Its subcellular location is the cytoplasm. It localises to the cytosol. It is found in the nucleus. The protein resides in the mitochondrion. It carries out the reaction nonanal + NAD(+) + H2O = nonanoate + NADH + 2 H(+). The catalysed reaction is (S)-2-amino-6-oxohexanoate + NAD(+) + H2O = L-2-aminoadipate + NADH + 2 H(+). The enzyme catalyses betaine aldehyde + NAD(+) + H2O = glycine betaine + NADH + 2 H(+). It catalyses the reaction an aldehyde + NAD(+) + H2O = a carboxylate + NADH + 2 H(+). It carries out the reaction hexanal + NAD(+) + H2O = hexanoate + NADH + 2 H(+). The catalysed reaction is octanal + NAD(+) + H2O = octanoate + NADH + 2 H(+). The enzyme catalyses (E)-non-2-enal + NAD(+) + H2O = (E)-non-2-enoate + NADH + 2 H(+). It catalyses the reaction (E)-4-hydroxynon-2-enal + NAD(+) + H2O = (E)-4-hydroxynon-2-enoate + NADH + 2 H(+). It functions in the pathway amine and polyamine biosynthesis; betaine biosynthesis via choline pathway; betaine from betaine aldehyde: step 1/1. Multifunctional enzyme mediating important protective effects. Metabolizes betaine aldehyde to betaine, an important cellular osmolyte and methyl donor. Protects cells from oxidative stress by metabolizing a number of lipid peroxidation-derived aldehydes. Involved in lysine catabolism. The chain is Alpha-aminoadipic semialdehyde dehydrogenase from Mus musculus (Mouse).